The sequence spans 461 residues: Mannose-6-phosphate isomerase (461 aa).

4 residues coordinate Zn(2+): Gln107, His109, Glu134, and His291. Arg310 is an active-site residue.

It belongs to the mannose-6-phosphate isomerase type 1 family. Zn(2+) is required as a cofactor.

The protein resides in the cytoplasm. It catalyses the reaction D-mannose 6-phosphate = D-fructose 6-phosphate. The protein operates within nucleotide-sugar biosynthesis; GDP-alpha-D-mannose biosynthesis; alpha-D-mannose 1-phosphate from D-fructose 6-phosphate: step 1/2. In terms of biological role, involved in the synthesis of the GDP-mannose and dolichol-phosphate-mannose required for a number of critical mannosyl transfer reactions. The chain is Mannose-6-phosphate isomerase (manA) from Emericella nidulans (strain FGSC A4 / ATCC 38163 / CBS 112.46 / NRRL 194 / M139) (Aspergillus nidulans).